Here is a 344-residue protein sequence, read N- to C-terminus: tRNA N6-adenosine threonylcarbamoyltransferase (344 aa).

Positions 111 and 115 each coordinate Fe cation. Residues 134 to 138, D167, G180, D184, and N277 contribute to the substrate site; that span reads LVSGG. D305 lines the Fe cation pocket.

This sequence belongs to the KAE1 / TsaD family. Requires Fe(2+) as cofactor.

It localises to the cytoplasm. The catalysed reaction is L-threonylcarbamoyladenylate + adenosine(37) in tRNA = N(6)-L-threonylcarbamoyladenosine(37) in tRNA + AMP + H(+). Functionally, required for the formation of a threonylcarbamoyl group on adenosine at position 37 (t(6)A37) in tRNAs that read codons beginning with adenine. Is involved in the transfer of the threonylcarbamoyl moiety of threonylcarbamoyl-AMP (TC-AMP) to the N6 group of A37, together with TsaE and TsaB. TsaD likely plays a direct catalytic role in this reaction. In Microcystis aeruginosa (strain NIES-843 / IAM M-2473), this protein is tRNA N6-adenosine threonylcarbamoyltransferase.